We begin with the raw amino-acid sequence, 288 residues long: Diaminopimelate epimerase (288 aa).

Asn13, Gln46, and Asn66 together coordinate substrate. Cys75 (proton donor) is an active-site residue. Substrate is bound by residues 76–77 (GN), Asn166, Asn199, and 217–218 (ER). Cys226 (proton acceptor) is an active-site residue. Position 227–228 (227–228 (GT)) interacts with substrate.

The protein belongs to the diaminopimelate epimerase family. As to quaternary structure, homodimer.

The protein localises to the cytoplasm. It catalyses the reaction (2S,6S)-2,6-diaminopimelate = meso-2,6-diaminopimelate. The protein operates within amino-acid biosynthesis; L-lysine biosynthesis via DAP pathway; DL-2,6-diaminopimelate from LL-2,6-diaminopimelate: step 1/1. Its function is as follows. Catalyzes the stereoinversion of LL-2,6-diaminopimelate (L,L-DAP) to meso-diaminopimelate (meso-DAP), a precursor of L-lysine and an essential component of the bacterial peptidoglycan. This chain is Diaminopimelate epimerase, found in Cupriavidus taiwanensis (strain DSM 17343 / BCRC 17206 / CCUG 44338 / CIP 107171 / LMG 19424 / R1) (Ralstonia taiwanensis (strain LMG 19424)).